A 198-amino-acid chain; its full sequence is Holliday junction resolvase RecU (198 aa).

Positions 1–21 are disordered; sequence MVNYPHKLSSQKRQPSLSQPK. Polar residues predominate over residues 11 to 21; it reads QKRQPSLSQPK. Residues Thr81, Asp83, Glu96, and Gln115 each coordinate Mg(2+).

Belongs to the RecU family. Mg(2+) serves as cofactor.

It is found in the cytoplasm. It carries out the reaction Endonucleolytic cleavage at a junction such as a reciprocal single-stranded crossover between two homologous DNA duplexes (Holliday junction).. Functionally, endonuclease that resolves Holliday junction intermediates in genetic recombination. Cleaves mobile four-strand junctions by introducing symmetrical nicks in paired strands. Promotes annealing of linear ssDNA with homologous dsDNA. Required for DNA repair, homologous recombination and chromosome segregation. The sequence is that of Holliday junction resolvase RecU from Streptococcus pneumoniae (strain ATCC 700669 / Spain 23F-1).